A 93-amino-acid polypeptide reads, in one-letter code: Large ribosomal subunit protein uL23 (93 aa).

The protein belongs to the universal ribosomal protein uL23 family. Part of the 50S ribosomal subunit. Contacts protein L29, and trigger factor when it is bound to the ribosome.

One of the early assembly proteins it binds 23S rRNA. One of the proteins that surrounds the polypeptide exit tunnel on the outside of the ribosome. Forms the main docking site for trigger factor binding to the ribosome. The chain is Large ribosomal subunit protein uL23 from Campylobacter jejuni subsp. jejuni serotype O:2 (strain ATCC 700819 / NCTC 11168).